The following is a 129-amino-acid chain: NADH dehydrogenase [ubiquinone] 1 beta subcomplex subunit 4 (129 aa).

The residue at position 2 (S2) is an N-acetylserine. S26 is modified (phosphoserine). The helical transmembrane segment at 88–105 (LMGALCGFGPLIFIYYII) threads the bilayer.

This sequence belongs to the complex I NDUFB4 subunit family. In terms of assembly, complex I is composed of 45 different subunits.

Its subcellular location is the mitochondrion inner membrane. In terms of biological role, accessory subunit of the mitochondrial membrane respiratory chain NADH dehydrogenase (Complex I), that is believed not to be involved in catalysis. Complex I functions in the transfer of electrons from NADH to the respiratory chain. The immediate electron acceptor for the enzyme is believed to be ubiquinone. The sequence is that of NADH dehydrogenase [ubiquinone] 1 beta subcomplex subunit 4 (NDUFB4) from Gorilla gorilla gorilla (Western lowland gorilla).